Consider the following 337-residue polypeptide: Inositol 2-dehydrogenase (337 aa).

The protein belongs to the Gfo/Idh/MocA family. As to quaternary structure, homotetramer.

The catalysed reaction is myo-inositol + NAD(+) = scyllo-inosose + NADH + H(+). In terms of biological role, involved in the oxidation of myo-inositol (MI) to 2-keto-myo-inositol (2KMI or 2-inosose). The chain is Inositol 2-dehydrogenase from Gluconacetobacter diazotrophicus (strain ATCC 49037 / DSM 5601 / CCUG 37298 / CIP 103539 / LMG 7603 / PAl5).